Reading from the N-terminus, the 185-residue chain is Elongation factor P (185 aa).

Belongs to the elongation factor P family.

It is found in the cytoplasm. The protein operates within protein biosynthesis; polypeptide chain elongation. Its function is as follows. Involved in peptide bond synthesis. Stimulates efficient translation and peptide-bond synthesis on native or reconstituted 70S ribosomes in vitro. Probably functions indirectly by altering the affinity of the ribosome for aminoacyl-tRNA, thus increasing their reactivity as acceptors for peptidyl transferase. The protein is Elongation factor P of Oceanobacillus iheyensis (strain DSM 14371 / CIP 107618 / JCM 11309 / KCTC 3954 / HTE831).